The chain runs to 662 residues: Transforming growth factor beta activator LRRC32 (662 aa).

Positions 1-17 (MRPQILLLLALLTLGLA) are cleaved as a signal peptide. Over 18–625 (AQRQDKVPCK…EDCEKGGLKN (608 aa)) the chain is Extracellular. The region spanning 21–48 (QDKVPCKMVDKKVSCQGLGLLQVPSVLP) is the LRRNT domain. LRR repeat units lie at residues 50–73 (DTET…GFYT), 74–95 (ALRH…AFQA), 98–119 (HLEH…SAGG), 125–145 (RVTS…ERLL), 150–171 (SLHT…TFRD), 174–195 (VLEQ…AFEG), 198–219 (RLTH…SLQQ), 220–240 (LRVL…SQPQ), 244–265 (QLTW…AALP), and 266–286 (RLIY…PPQD). Asn203 carries an N-linked (GlcNAc...) asparagine glycan. Residues Asn271 and Asn308 are each glycosylated (N-linked (GlcNAc...) asparagine). LRR repeat units lie at residues 316 to 339 (QLLN…EHLT), 340 to 361 (SLCF…RSGS), 364 to 385 (CLML…ARAL), 387 to 408 (SLRT…TFAN), 411 to 432 (SLQR…DEPG), 444 to 465 (SLHS…AFLH), 467 to 488 (PLTE…ALGG), 492 to 513 (SLEV…LPCF), 515 to 536 (CLKR…TQAV), and 537 to 558 (SLEV…AMGG). Asn345 is a glycosylation site (N-linked (GlcNAc...) asparagine). A glycan (N-linked (GlcNAc...) asparagine) is linked at Asn545. The LRRCT domain occupies 571–620 (NPLSCCGNGWLAAQLHQGRVDVDATQDLICRFSSQEEVSLSHVRPEDCEK). A helical membrane pass occupies residues 626 to 646 (INLIIILTFILVSAILLTTLA). The Cytoplasmic portion of the chain corresponds to 647-662 (TCCCVRRQKFNQQYKA).

It belongs to the LRRC32/LRRC33 family. As to quaternary structure, interacts with TGFB1; associates via disulfide bonds with the Latency-associated peptide chain (LAP) regulatory chain of TGFB1, leading to regulate activation of TGF-beta-1. Interacts with TGFB2. Interacts with TGFB3; associates via disulfide bonds with the Latency-associated peptide chain (LAP) regulatory chain of TGFB3, leading to regulate activation of TGF-beta-3. Interacts with LAPTM4B; decreases TGFB1 production in regulatory T-cells.

Its subcellular location is the cell membrane. It localises to the cell surface. Its function is as follows. Key regulator of transforming growth factor beta (TGFB1, TGFB2 and TGFB3) that controls TGF-beta activation by maintaining it in a latent state during storage in extracellular space. Associates specifically via disulfide bonds with the Latency-associated peptide (LAP), which is the regulatory chain of TGF-beta, and regulates integrin-dependent activation of TGF-beta. Able to outcompete LTBP1 for binding to LAP regulatory chain of TGF-beta. Controls activation of TGF-beta-1 (TGFB1) on the surface of activated regulatory T-cells (Tregs). Required for epithelial fusion during palate development by regulating activation of TGF-beta-3 (TGFB3). This Pongo abelii (Sumatran orangutan) protein is Transforming growth factor beta activator LRRC32.